A 428-amino-acid chain; its full sequence is Exodeoxyribonuclease 7 large subunit (428 aa).

It belongs to the XseA family. As to quaternary structure, heterooligomer composed of large and small subunits.

It localises to the cytoplasm. The catalysed reaction is Exonucleolytic cleavage in either 5'- to 3'- or 3'- to 5'-direction to yield nucleoside 5'-phosphates.. In terms of biological role, bidirectionally degrades single-stranded DNA into large acid-insoluble oligonucleotides, which are then degraded further into small acid-soluble oligonucleotides. The chain is Exodeoxyribonuclease 7 large subunit from Mycobacterium leprae (strain TN).